The chain runs to 280 residues: Succinate dehydrogenase [ubiquinone] iron-sulfur subunit, mitochondrial (280 aa).

A mitochondrion-targeting transit peptide spans 1–25 (MAAVCFSLSRCCSAVHRPAVTAVRF). The 2Fe-2S ferredoxin-type domain occupies 39 to 129 (KKFQIYRWDP…TSKVTKIYPL (91 aa)). Residues Cys92, Cys97, Cys100, and Cys112 each coordinate [2Fe-2S] cluster. A 4Fe-4S ferredoxin-type domain is found at 175-205 (DRQKLDGLYECILCACCSTSCPSYWWNADKY). Cys185, Cys188, and Cys191 together coordinate [4Fe-4S] cluster. Cys195 serves as a coordination point for [3Fe-4S] cluster. Position 200 (Trp200) interacts with a ubiquinone. [3Fe-4S] cluster-binding residues include Cys242 and Cys248. Position 252 (Cys252) interacts with [4Fe-4S] cluster.

The protein belongs to the succinate dehydrogenase/fumarate reductase iron-sulfur protein family. As to quaternary structure, component of complex II composed of four subunits: the flavoprotein (FP) sdha, iron-sulfur protein (IP) sdhb, and a cytochrome b composed of sdhc and sdhd. [2Fe-2S] cluster is required as a cofactor. The cofactor is [3Fe-4S] cluster. Requires [4Fe-4S] cluster as cofactor.

The protein resides in the mitochondrion inner membrane. It carries out the reaction a quinone + succinate = fumarate + a quinol. It catalyses the reaction (R)-malate + a quinone = enol-oxaloacetate + a quinol. The catalysed reaction is (S)-malate + a quinone = enol-oxaloacetate + a quinol. The protein operates within carbohydrate metabolism; tricarboxylic acid cycle; fumarate from succinate (eukaryal route): step 1/1. With respect to regulation, enol-oxaloacetate inhibits the succinate dehydrogenase activity. Its function is as follows. Iron-sulfur protein (IP) subunit of the succinate dehydrogenase complex (mitochondrial respiratory chain complex II), responsible for transferring electrons from succinate to ubiquinone (coenzyme Q). SDH also oxidizes malate to the non-canonical enol form of oxaloacetate, enol-oxaloacetate. Enol-oxaloacetate, which is a potent inhibitor of the succinate dehydrogenase activity, is further isomerized into keto-oxaloacetate. In Danio rerio (Zebrafish), this protein is Succinate dehydrogenase [ubiquinone] iron-sulfur subunit, mitochondrial (sdhb).